A 489-amino-acid polypeptide reads, in one-letter code: Type II restriction enzyme Sau3AI (489 aa).

The cofactor is Mg(2+).

It catalyses the reaction Endonucleolytic cleavage of DNA to give specific double-stranded fragments with terminal 5'-phosphates.. In terms of biological role, an E and P subtype restriction enzyme that recognizes the double-stranded sequence 5'-GATC-3' and cleaves before G-1. The sequence is that of Type II restriction enzyme Sau3AI (sau3AIR) from Staphylococcus aureus.